The sequence spans 203 residues: Urease accessory protein UreG (203 aa).

14 to 21 (GPVGSGKT) is a GTP binding site.

It belongs to the SIMIBI class G3E GTPase family. UreG subfamily. As to quaternary structure, homodimer. UreD, UreF and UreG form a complex that acts as a GTP-hydrolysis-dependent molecular chaperone, activating the urease apoprotein by helping to assemble the nickel containing metallocenter of UreC. The UreE protein probably delivers the nickel.

It is found in the cytoplasm. In terms of biological role, facilitates the functional incorporation of the urease nickel metallocenter. This process requires GTP hydrolysis, probably effectuated by UreG. The chain is Urease accessory protein UreG from Rhizobium meliloti (strain 1021) (Ensifer meliloti).